The sequence spans 627 residues: Protein fem-1 homolog B (627 aa).

ANK repeat units lie at residues 45–74 (QRST…VQTQ), 87–116 (DGAT…NVNH), 120–149 (TNST…NISI), 153–182 (YDNT…DPNA), 186–215 (CGAT…AMMV), and 218–248 (HGMT…NRRS). Residues 344-377 (SHPIIYRGAVYADNMEFEQCIKLWLHALHLRQKG) form a TPR repeat. ANK repeat units lie at residues 483 to 527 (DGST…DVNA) and 531 to 568 (EGNS…HTDM).

The protein belongs to the fem-1 family. Component of a CRL2 E3 ubiquitin-protein ligase complex, also named ECS (Elongin BC-CUL2/5-SOCS-box protein) complex.

It is found in the cytoplasm. The protein resides in the nucleus. Its pathway is protein modification; protein ubiquitination. In terms of biological role, substrate-recognition component of a Cul2-RING (CRL2) E3 ubiquitin-protein ligase complex of the DesCEND (destruction via C-end degrons) pathway, which recognizes a C-degron located at the extreme C terminus of target proteins, leading to their ubiquitination and degradation. The C-degron recognized by the DesCEND pathway is usually a motif of less than ten residues and can be present in full-length proteins, truncated proteins or proteolytically cleaved forms. The CRL2(FEM1B) complex specifically recognizes proteins ending with -Gly-Leu-Asp-Arg, leading to their ubiquitination and degradation. In Gallus gallus (Chicken), this protein is Protein fem-1 homolog B.